A 247-amino-acid chain; its full sequence is Ribosomal RNA large subunit methyltransferase E (247 aa).

Residues 1 to 21 (MKKTTKKTAGGYGGSGSHKLY) are disordered. S-adenosyl-L-methionine contacts are provided by G88, W90, D111, D127, and D151. K191 (proton acceptor) is an active-site residue.

It belongs to the class I-like SAM-binding methyltransferase superfamily. RNA methyltransferase RlmE family.

The protein localises to the cytoplasm. It carries out the reaction uridine(2552) in 23S rRNA + S-adenosyl-L-methionine = 2'-O-methyluridine(2552) in 23S rRNA + S-adenosyl-L-homocysteine + H(+). In terms of biological role, specifically methylates the uridine in position 2552 of 23S rRNA at the 2'-O position of the ribose in the fully assembled 50S ribosomal subunit. The sequence is that of Ribosomal RNA large subunit methyltransferase E from Bartonella henselae (strain ATCC 49882 / DSM 28221 / CCUG 30454 / Houston 1) (Rochalimaea henselae).